We begin with the raw amino-acid sequence, 196 residues long: Putative 3-methyladenine DNA glycosylase (196 aa).

This sequence belongs to the DNA glycosylase MPG family.

The sequence is that of Putative 3-methyladenine DNA glycosylase from Chlorobium phaeovibrioides (strain DSM 265 / 1930) (Prosthecochloris vibrioformis (strain DSM 265)).